Reading from the N-terminus, the 519-residue chain is MDLVGVSSPEPGPAAAWGPSKCPWATPQNTVSCSLTEVMSEELAKELQLEEEAAAFPEVVVAEGPFISGENIDTSSDLMLAQMLQMEFDREYDAQLRREEKKFNGDSKVSISFENYRKVHPFEDSDSSEDEVDWQDTRDDPYRPAKPIPTPKKGFIGKGKDITTKHDEVVCGRKNTARMENFAPGFQVGDGIGMDLKLSNHVFNALKQHAYSEERRSARLHEKKEHSTAEKAVDPKTRLLMYKMVNSGMLETITGCISTGKESVVFHAYGGSLEDEKEDGKAIPTECAIKVFKTTLNEFKNRDKYIKDDFRFKDRFSKLNPRKIIRMWAEKEMHNLTRMQKAGIPCPTVVLLKKHILVMSFIGHDQVPAPKLKEVKLSNEEMKDAYYQTLHLMQQLYNECTLVHADLSEYNMLWHAGKVWLIDVSQSVEPTHPHGLEFLFRDCRNVSQFFQKGGVTEALNERELFNAVSGLNISADNEADFLAEIEALEKMNEDHIQKNGRKAASFLKDDGSPPVLSAD.

Phosphoserine is present on residues Ser-8, Ser-112, Ser-125, Ser-127, and Ser-128. A disordered region spans residues 122–159; sequence FEDSDSSEDEVDWQDTRDDPYRPAKPIPTPKKGFIGKG. The segment covering 124 to 134 has biased composition (acidic residues); it reads DSDSSEDEVDW. In terms of domain architecture, Protein kinase spans 251 to 519; sequence ETITGCISTG…DGSPPVLSAD (269 aa). Residues 257-265 and Lys-290 contribute to the ATP site; that span reads ISTGKESVV. Asp-406 acts as the Proton acceptor in catalysis. Ser-512 is modified (phosphoserine).

The protein belongs to the protein kinase superfamily. RIO-type Ser/Thr kinase family. As to quaternary structure, interacts with CASP10. Interacts with IRF3; RIOK3 probably mediates the interaction of TBK1 with IRF3. Associated with 40S pre-ribosomal particles. Mg(2+) is required as a cofactor. Autophosphorylated (in vitro).

It is found in the cytoplasm. The catalysed reaction is L-seryl-[protein] + ATP = O-phospho-L-seryl-[protein] + ADP + H(+). It catalyses the reaction L-threonyl-[protein] + ATP = O-phospho-L-threonyl-[protein] + ADP + H(+). In terms of biological role, involved in regulation of type I interferon (IFN)-dependent immune response which plays a critical role in the innate immune response against DNA and RNA viruses. May act as an adapter protein essential for the recruitment of TBK1 to IRF3. Phosphorylates IFIH1 on 'Ser-828' interfering with IFIH1 filament assembly on long dsRNA and resulting in attenuated IFIH1-signaling. Can inhibit CASP10 isoform 7-mediated activation of the NF-kappaB signaling pathway. May play a role in the biogenesis of the 40S ribosomal subunit. Involved in the processing of 21S pre-rRNA to the mature 18S rRNA. This chain is Serine/threonine-protein kinase RIO3 (Riok3), found in Mus musculus (Mouse).